The chain runs to 272 residues: Orotidine 5'-phosphate decarboxylase (272 aa).

Lys93 functions as the Proton donor in the catalytic mechanism.

The protein belongs to the OMP decarboxylase family. Type 2 subfamily.

It catalyses the reaction orotidine 5'-phosphate + H(+) = UMP + CO2. It participates in pyrimidine metabolism; UMP biosynthesis via de novo pathway; UMP from orotate: step 2/2. In Roseiflexus sp. (strain RS-1), this protein is Orotidine 5'-phosphate decarboxylase.